We begin with the raw amino-acid sequence, 78 residues long: Acyl carrier protein (78 aa).

Residues S2–S77 form the Carrier domain. At S37 the chain carries O-(pantetheine 4'-phosphoryl)serine.

It belongs to the acyl carrier protein (ACP) family. 4'-phosphopantetheine is transferred from CoA to a specific serine of apo-ACP by AcpS. This modification is essential for activity because fatty acids are bound in thioester linkage to the sulfhydryl of the prosthetic group.

Its subcellular location is the cytoplasm. Its pathway is lipid metabolism; fatty acid biosynthesis. Carrier of the growing fatty acid chain in fatty acid biosynthesis. The sequence is that of Acyl carrier protein from Brucella abortus (strain S19).